Reading from the N-terminus, the 336-residue chain is MSRVTLSRYLIEQTRSNNTPADLRFLIEVVARACKEISHHVSKGALGGVLGSMGTENVQGEVQKKLDVISNDILLEANEWGGHLAGMASEEMDNAYQIPGKYPKGAYLLVFDPLDGSSNIDVNVSVGTIFSVLRCPNQYLSQNESLNEAAFLQPGTEQVAAGYAIYGPQTMLILTLGNGVKGFTLDRELGSFVLTHENIRVPETTAEFAINMSNQRHWEAPVQRYVGELLAGETGPLKKNYNMRWIASMVADVHRILTRGGLFMYPRDAREPSKPGKLRLMYEANPMSFIIEQAGGASTNGYDRILDIKPESLHQRVSVILGSKEEVERVTAYHKE.

The Mg(2+) site is built by E90, D112, L114, and D115. Residues 115-118 (DGSS), N211, and K277 contribute to the substrate site. E283 is a binding site for Mg(2+).

The protein belongs to the FBPase class 1 family. As to quaternary structure, homotetramer. It depends on Mg(2+) as a cofactor.

The protein localises to the cytoplasm. The enzyme catalyses beta-D-fructose 1,6-bisphosphate + H2O = beta-D-fructose 6-phosphate + phosphate. The protein operates within carbohydrate biosynthesis; gluconeogenesis. This chain is Fructose-1,6-bisphosphatase class 1, found in Pseudomonas entomophila (strain L48).